The chain runs to 294 residues: MRATIPFPDMSPEIFSISVFGFDLALRWYALAYIVGIVLGWRLVLRAVKRPDLWRDDQPVMTAAQIEDLLTWVIVGVILGGRLGYVFFYQPGYYLQNPSEILAVWQGGMAFHGGLLGVIAAGFIYTWRHRIARLSAADIMALGVPPGLLLGRIANFINAELWGRATDMPWGVAFPGAAAQDCAGVEGICARHPSQLYEAGLEGLILGALLIWLVWKKAALKTPGYVAGVFFAGYGVSRFFVEFFRQPDAQFITDGNPLGLAWHINGWGLTMGQCLSLPMILLGIWLIARARHAA.

A run of 7 helical transmembrane segments spans residues 19 to 39 (VFGF…GIVL), 69 to 89 (LLTW…VFFY), 101 to 121 (ILAV…VIAA), 139 to 159 (IMAL…FINA), 195 to 215 (QLYE…WLVW), 224 to 244 (GYVA…VEFF), and 267 to 287 (WGLT…IWLI). Residue Arg-152 coordinates a 1,2-diacyl-sn-glycero-3-phospho-(1'-sn-glycerol).

Belongs to the Lgt family.

It localises to the cell inner membrane. It carries out the reaction L-cysteinyl-[prolipoprotein] + a 1,2-diacyl-sn-glycero-3-phospho-(1'-sn-glycerol) = an S-1,2-diacyl-sn-glyceryl-L-cysteinyl-[prolipoprotein] + sn-glycerol 1-phosphate + H(+). The protein operates within protein modification; lipoprotein biosynthesis (diacylglyceryl transfer). In terms of biological role, catalyzes the transfer of the diacylglyceryl group from phosphatidylglycerol to the sulfhydryl group of the N-terminal cysteine of a prolipoprotein, the first step in the formation of mature lipoproteins. This is Phosphatidylglycerol--prolipoprotein diacylglyceryl transferase from Roseobacter denitrificans (strain ATCC 33942 / OCh 114) (Erythrobacter sp. (strain OCh 114)).